Consider the following 337-residue polypeptide: Phenylalanine--tRNA ligase alpha subunit (337 aa).

Position 252 (Glu-252) interacts with Mg(2+).

It belongs to the class-II aminoacyl-tRNA synthetase family. Phe-tRNA synthetase alpha subunit type 1 subfamily. In terms of assembly, tetramer of two alpha and two beta subunits. Mg(2+) serves as cofactor.

It is found in the cytoplasm. The enzyme catalyses tRNA(Phe) + L-phenylalanine + ATP = L-phenylalanyl-tRNA(Phe) + AMP + diphosphate + H(+). The chain is Phenylalanine--tRNA ligase alpha subunit from Francisella tularensis subsp. tularensis (strain SCHU S4 / Schu 4).